The following is a 463-amino-acid chain: GTPase Der (463 aa).

2 EngA-type G domains span residues proline 27 to glycine 190 and arginine 200 to aspartate 373. GTP-binding positions include glycine 33–serine 40, aspartate 80–tryptophan 84, asparagine 142–aspartate 145, glycine 206–serine 213, aspartate 253–leucine 257, and asparagine 318–aspartate 321. The 83-residue stretch at threonine 374–glutamate 456 folds into the KH-like domain.

This sequence belongs to the TRAFAC class TrmE-Era-EngA-EngB-Septin-like GTPase superfamily. EngA (Der) GTPase family. As to quaternary structure, associates with the 50S ribosomal subunit.

Its function is as follows. GTPase that plays an essential role in the late steps of ribosome biogenesis. This is GTPase Der from Mycobacterium bovis (strain ATCC BAA-935 / AF2122/97).